The sequence spans 30 residues: Cyclotide hyen-F (30 aa).

The cyclopeptide (Gly-Asn) cross-link spans 1 to 30 (GLPCGESCVYIPCISTVLGCSCSNKVCYRN). 3 disulfide bridges follow: C4-C20, C8-C22, and C13-C27.

In terms of processing, this is a cyclic peptide. Detected in seeds (at protein level).

Probably participates in a plant defense mechanism. The chain is Cyclotide hyen-F from Pigea enneasperma (Spade flower).